The primary structure comprises 299 residues: Fluorinase (299 aa).

S-adenosyl-L-methionine is bound by residues aspartate 16, 21–23 (DDS), tyrosine 77, serine 158, aspartate 210, asparagine 215, 269–270 (SR), and 277–279 (RNA).

Homohexamer; dimers of trimer.

The catalysed reaction is fluoride + S-adenosyl-L-methionine = 5'-deoxy-5'-fluoroadenosine + L-methionine. Competitively inhibited by S-adenosyl-L-homocysteine (AdoHcy) and S-adenosyl-L-homocysteine (SAH). Sinefungin is only weakly inhibitory. In terms of biological role, involved in the biosynthesis of fluorometabolites. Catalyzes the formation of a C-F bond by combining S-adenosyl-L-methionine (SAM) and fluoride to generate 5'-fluoro-5'-deoxyadenosine (5'-FDA) and L-methionine. It can also use 2'-deoxyadenosine in place of adenosine as substrate. The protein is Fluorinase of Streptantibioticus cattleyicolor (Streptomyces cattleya).